Reading from the N-terminus, the 196-residue chain is Imidazoleglycerol-phosphate dehydratase (196 aa).

It belongs to the imidazoleglycerol-phosphate dehydratase family.

It localises to the cytoplasm. The enzyme catalyses D-erythro-1-(imidazol-4-yl)glycerol 3-phosphate = 3-(imidazol-4-yl)-2-oxopropyl phosphate + H2O. The protein operates within amino-acid biosynthesis; L-histidine biosynthesis; L-histidine from 5-phospho-alpha-D-ribose 1-diphosphate: step 6/9. This chain is Imidazoleglycerol-phosphate dehydratase, found in Halobacterium salinarum (strain ATCC 700922 / JCM 11081 / NRC-1) (Halobacterium halobium).